A 60-amino-acid polypeptide reads, in one-letter code: MADKKIKVTLVKSVIGTKQDHRATVKGLGLRKLNSSSELIDTPAVRGMIQKVQYLVKVEG.

Belongs to the universal ribosomal protein uL30 family. In terms of assembly, part of the 50S ribosomal subunit.

This Dechloromonas aromatica (strain RCB) protein is Large ribosomal subunit protein uL30.